A 100-amino-acid polypeptide reads, in one-letter code: Aspartyl/glutamyl-tRNA(Asn/Gln) amidotransferase subunit C (100 aa).

Belongs to the GatC family. As to quaternary structure, heterotrimer of A, B and C subunits.

It carries out the reaction L-glutamyl-tRNA(Gln) + L-glutamine + ATP + H2O = L-glutaminyl-tRNA(Gln) + L-glutamate + ADP + phosphate + H(+). The enzyme catalyses L-aspartyl-tRNA(Asn) + L-glutamine + ATP + H2O = L-asparaginyl-tRNA(Asn) + L-glutamate + ADP + phosphate + 2 H(+). In terms of biological role, allows the formation of correctly charged Asn-tRNA(Asn) or Gln-tRNA(Gln) through the transamidation of misacylated Asp-tRNA(Asn) or Glu-tRNA(Gln) in organisms which lack either or both of asparaginyl-tRNA or glutaminyl-tRNA synthetases. The reaction takes place in the presence of glutamine and ATP through an activated phospho-Asp-tRNA(Asn) or phospho-Glu-tRNA(Gln). The polypeptide is Aspartyl/glutamyl-tRNA(Asn/Gln) amidotransferase subunit C (Herminiimonas arsenicoxydans).